The sequence spans 197 residues: Protein GrpE (197 aa).

A disordered region spans residues 1 to 39; the sequence is MSSKEQKTPEGQAPEEIIMDQHEEIEAVEPEASAEQVDP.

It belongs to the GrpE family. Homodimer.

Its subcellular location is the cytoplasm. Its function is as follows. Participates actively in the response to hyperosmotic and heat shock by preventing the aggregation of stress-denatured proteins, in association with DnaK and GrpE. It is the nucleotide exchange factor for DnaK and may function as a thermosensor. Unfolded proteins bind initially to DnaJ; upon interaction with the DnaJ-bound protein, DnaK hydrolyzes its bound ATP, resulting in the formation of a stable complex. GrpE releases ADP from DnaK; ATP binding to DnaK triggers the release of the substrate protein, thus completing the reaction cycle. Several rounds of ATP-dependent interactions between DnaJ, DnaK and GrpE are required for fully efficient folding. This is Protein GrpE from Escherichia coli O157:H7 (strain EC4115 / EHEC).